The chain runs to 635 residues: Threonine--tRNA ligase (635 aa).

The TGS domain occupies 1-61 (MVSIRLPDGS…DRDASLAIVT (61 aa)). Residues 242–533 (DHRKLGKQLD…LIEHHAGAMP (292 aa)) are catalytic. The Zn(2+) site is built by Cys333, His384, and His510.

Belongs to the class-II aminoacyl-tRNA synthetase family. Homodimer. Requires Zn(2+) as cofactor.

The protein resides in the cytoplasm. The catalysed reaction is tRNA(Thr) + L-threonine + ATP = L-threonyl-tRNA(Thr) + AMP + diphosphate + H(+). Catalyzes the attachment of threonine to tRNA(Thr) in a two-step reaction: L-threonine is first activated by ATP to form Thr-AMP and then transferred to the acceptor end of tRNA(Thr). Also edits incorrectly charged L-seryl-tRNA(Thr). This Burkholderia lata (strain ATCC 17760 / DSM 23089 / LMG 22485 / NCIMB 9086 / R18194 / 383) protein is Threonine--tRNA ligase.